The following is a 249-amino-acid chain: MPAPVLSGPQYLREGLKLVLSPGLRLFVLLPLAINLVLFVGLIYFAGHQFSLWVDALMPSLPSWLSFLSYVIWPLFVVLVAFMVFFSFTMLANIIAAPFNGFLSEKVETVVRGTDDFPPFSWGELIAMIPRTLAREMRKLGYFLPRAIGLFILSLIPVVNLIAAPLWLLFGIWMMAIQYIDYPADNHKMSWQDMLAWLRQKRWQSLGFGGIVYLALLIPLVNILMMPAAVAGATLFWVRERGVENLPAK.

The next 4 helical transmembrane spans lie at 26–46, 71–91, 150–170, and 206–226; these read LFVLLPLAINLVLFVGLIYFA, VIWPLFVVLVAFMVFFSFTML, LFILSLIPVVNLIAAPLWLLF, and LGFGGIVYLALLIPLVNILMM.

This sequence belongs to the CysZ family.

The protein localises to the cell inner membrane. Its function is as follows. High affinity, high specificity proton-dependent sulfate transporter, which mediates sulfate uptake. Provides the sulfur source for the cysteine synthesis pathway. In Pseudomonas fluorescens (strain ATCC BAA-477 / NRRL B-23932 / Pf-5), this protein is Sulfate transporter CysZ.